The chain runs to 247 residues: MQHPLELGAAHYFPAEAFPDHRSHRYRSFMIEEILTDPPDAKGTAPPGELLKFGVQALLSARPYHSHLAVLKAEPAAVFKFPLAPLGCSGLGSALLAAGSGLQGGSASPHLPLELHLRGKLEPGGPETGSKAKKGRRSRTVFTELQLMGLEKRFEKQKYLSTPDRIDLAESLGLSQLQVKTWYQNRRMKWKKIVLQGGGLESPTKPKGRPKKNSIPSSEQLSEQERARDAEKPPESLGSPAEVSQEE.

Disordered stretches follow at residues 118–138 (RGKL…GRRS) and 197–247 (GGGL…SQEE). Residues 135-194 (GRRSRTVFTELQLMGLEKRFEKQKYLSTPDRIDLAESLGLSQLQVKTWYQNRRMKWKKIV) constitute a DNA-binding region (homeobox). Over residues 223-234 (EQERARDAEKPP) the composition is skewed to basic and acidic residues.

The protein belongs to the BAR homeobox family. Interacts with serum response factor (SRF). As to expression, expressed in smooth muscle cells of the upper digestive organs and their attached arteries and to craniofacial structures.

The protein resides in the nucleus. Transcription factor which is involved with the serum response factor (SRF) in the smooth muscle cell-specific transcription of the beta-tropomyosin gene in the upper digestive organs and their attached arteries. This chain is Homeobox protein BarH-like 1b (BARX1B), found in Gallus gallus (Chicken).